A 318-amino-acid chain; its full sequence is MSEEGPQVKIREASKDNVDFILSNVDLAMANSLRRVMIAEIPTLAIDSVEVETNTTVLADEFIAHRLGLIPLQSMDIEQLEYSRDCFCEDHCDKCSVVLTLQAFGESESTTNVYSKDLVIVSNLMGRNIGHPIIQDKEGNGVLICKLRKGQELKLTCVAKKGIAKEHAKWGPAAAIEFEYDPWNKLKHTDYWYEQDSAKEWPQSKNCEYEDPPNEGDPFDYKAQADTFYMNVESVGSIPVDQVVVRGIDTLQKKVASILLALTQMDQDKVNFASGDNNTASNMLGSNEDVMMTGAEQDPYSNASQMGNTGSGGYDNAW.

Residue S2 is modified to N-acetylserine. The Zn(2+) site is built by C86, C88, C92, and C95. The interval 297-318 is disordered; the sequence is QDPYSNASQMGNTGSGGYDNAW. The segment covering 299 to 308 has biased composition (polar residues); it reads PYSNASQMGN. Positions 309-318 are enriched in gly residues; sequence TGSGGYDNAW.

This sequence belongs to the archaeal Rpo3/eukaryotic RPB3 RNA polymerase subunit family. Component of the RNA polymerase II (Pol II) complex consisting of 12 subunits.

Its subcellular location is the nucleus. Its function is as follows. DNA-dependent RNA polymerase catalyzes the transcription of DNA into RNA using the four ribonucleoside triphosphates as substrates. Component of RNA polymerase II which synthesizes mRNA precursors and many functional non-coding RNAs. Pol II is the central component of the basal RNA polymerase II transcription machinery. It is composed of mobile elements that move relative to each other. RPB3 is part of the core element with the central large cleft and the clamp element that moves to open and close the cleft. Seems to be involved in transcription termination. This is DNA-directed RNA polymerase II subunit RPB3 (RPB3) from Saccharomyces cerevisiae (strain ATCC 204508 / S288c) (Baker's yeast).